The following is a 70-amino-acid chain: Putative membrane protein insertion efficiency factor (70 aa).

This sequence belongs to the UPF0161 family.

Its subcellular location is the cell membrane. In terms of biological role, could be involved in insertion of integral membrane proteins into the membrane. The chain is Putative membrane protein insertion efficiency factor from Lachnoclostridium phytofermentans (strain ATCC 700394 / DSM 18823 / ISDg) (Clostridium phytofermentans).